A 149-amino-acid polypeptide reads, in one-letter code: Nascent polypeptide-associated complex subunit beta-2 (149 aa).

The NAC-A/B domain maps to 38 to 103 (DKDNTKLQAE…PKENTLNGLY (66 aa)).

This sequence belongs to the NAC-beta family. As to quaternary structure, part of the nascent polypeptide-associated complex (NAC), consisting of EGD2 and either EGD1 or BTT1. NAC associates with ribosomes via EGD1 or BTT1.

It is found in the cytoplasm. The protein localises to the nucleus. Its function is as follows. Acts as a component of the nascent polypeptide-associated complex (NAC), which promotes mitochondrial protein import by enhancing productive ribosome interactions with the outer mitochondrial membrane. Also blocks the inappropriate interaction of ribosomes translating non-secretory nascent polypeptides with translocation sites in the membrane of the endoplasmic reticulum. BTT1 may act as a transcription factor that exert a negative effect on the expression of several genes that are transcribed by RNA polymerase II. This Saccharomyces cerevisiae (strain ATCC 204508 / S288c) (Baker's yeast) protein is Nascent polypeptide-associated complex subunit beta-2 (BTT1).